The following is a 745-amino-acid chain: Receptor-type adenylate cyclase (745 aa).

The Extracellular portion of the chain corresponds to 1 to 341 (GELGQTDRFF…NEGALTRAQL (341 aa)). 4 N-linked (GlcNAc...) asparagine glycosylation sites follow: N15, N50, N189, and N312. The chain crosses the membrane as a helical span at residues 342-362 (IGVVVGTIFAVLLLLALGIVL). Residues 363–745 (CVALRNTRDN…GSDEVARTCV (383 aa)) are Cytoplasmic-facing. The 155-residue stretch at 384-538 (TLIFTDIESS…RTPNLAARTE (155 aa)) folds into the Guanylate cyclase domain. Residues D389 and D432 each coordinate Mg(2+).

It belongs to the adenylyl cyclase class-3 family. Mg(2+) serves as cofactor.

The protein localises to the cell membrane. It carries out the reaction ATP = 3',5'-cyclic AMP + diphosphate. In terms of biological role, could act as a receptor for an unknown ligand. This chain is Receptor-type adenylate cyclase, found in Trypanosoma congolense.